The chain runs to 710 residues: MPEDAIGQQVPPEQEAAGAEPTSAARERHATLSLELTEHQYRYYVLDAPTISDAEFDERLRELAALEAEFPALRTPDSPTQRVGGAFSTDFTPVAHAERMMSLDNAFTDEELDAWAERVERDAGGPVPYLCELKVDGLAINLTYERGRLVRAATRGDGRTGEDVTANVRSIRDVPAELAPSAEFPEIPGLLEVRGEIYFPIAGFADLNAGLVEQGKAPFANPRNAAAGSLRQKDPRITASRPLRLVVHGIGARQGWQPSTQSESYAALRAWGLPTSDRWRVVPDLAGVAEYIAHYATHRHDVEHEIDGVVVKVDPVSIQGRLGSTSRAPRWAIAFKYPPEEVNTRLLDIDVNVGRTGRVTPFAVLEPVRVAGSTVALATLHNAREVRRKGVLIGDTVVIRKAGDVIPEVLGPVVELRPPDARSFVMPSTCPCCGTPLAPAKEGDVDIRCPNTRSCPAQLRERVFHLAGRGAFDIEVLGYKGAAALLDAQIITDEGDLFALDAAQLTRSPFFVNKDGSLGSNAVKLLDNLTVAKERELWRVLVALSIRHVGPTAAQALARHFRSIEAIDQAGEEELSAVDGVGPTIAASVREWFAVAWHREVVRKWAEAGVRMTEEAVDEGPRPLEGMTVVVTGTLAGFSRDQAAEAIQSRGGKVTGSVSKKTAFVVVGENPGTKADKAASLKVPVLDEEGFRVLLDAGPDAAREVARVED.

The segment at 1–26 (MPEDAIGQQVPPEQEAAGAEPTSAAR) is disordered. NAD(+) contacts are provided by residues 53–57 (DAEFD), 102–103 (SL), and Glu132. Lys134 (N6-AMP-lysine intermediate) is an active-site residue. NAD(+)-binding residues include Arg155, Glu196, Lys312, and Lys336. Positions 430, 433, 449, and 455 each coordinate Zn(2+). Positions 619–708 (EGPRPLEGMT…PDAAREVARV (90 aa)) constitute a BRCT domain.

Belongs to the NAD-dependent DNA ligase family. LigA subfamily. The cofactor is Mg(2+). Requires Mn(2+) as cofactor.

The enzyme catalyses NAD(+) + (deoxyribonucleotide)n-3'-hydroxyl + 5'-phospho-(deoxyribonucleotide)m = (deoxyribonucleotide)n+m + AMP + beta-nicotinamide D-nucleotide.. DNA ligase that catalyzes the formation of phosphodiester linkages between 5'-phosphoryl and 3'-hydroxyl groups in double-stranded DNA using NAD as a coenzyme and as the energy source for the reaction. It is essential for DNA replication and repair of damaged DNA. In Salinispora arenicola (strain CNS-205), this protein is DNA ligase.